A 460-amino-acid chain; its full sequence is Argininosuccinate lyase (460 aa).

The protein belongs to the lyase 1 family. Argininosuccinate lyase subfamily.

The protein resides in the cytoplasm. It catalyses the reaction 2-(N(omega)-L-arginino)succinate = fumarate + L-arginine. It functions in the pathway amino-acid biosynthesis; L-arginine biosynthesis; L-arginine from L-ornithine and carbamoyl phosphate: step 3/3. The protein is Argininosuccinate lyase of Alteromonas mediterranea (strain DSM 17117 / CIP 110805 / LMG 28347 / Deep ecotype).